Here is a 99-residue protein sequence, read N- to C-terminus: MSTILVLGGSNGRTLEKLAKKRDCQVIFHDGKNHGGVKKTFRSVIKKCDVIVVQKGACGHVSIDVAKEYAKKYDVPLLFNQGFGGTGALEIGLKHLQVA.

The protein belongs to the UPF0751 family.

The protein is UPF0751 protein BCE_A0020 of Bacillus cereus (strain ATCC 10987 / NRS 248).